A 41-amino-acid polypeptide reads, in one-letter code: Ornatin-A3 (41 aa).

The short motif at R33–D35 is the Cell attachment site element.

Belongs to the ornatin family.

The protein localises to the secreted. In terms of biological role, potent inhibitor of fibrinogen interaction with platelet receptors expressed on glycoprotein IIb-IIIa complex. May prevent blood from clotting during either feeding and/or storage of ingested blood. The polypeptide is Ornatin-A3 (Placobdella ornata (Turtle leech)).